Reading from the N-terminus, the 502-residue chain is Facilitated trehalose transporter Tret1 (502 aa).

The Cytoplasmic segment spans residues 1 to 38; it reads MGVENTKQTMSSQNIKPAKDSDDVLHTQFKEVKRSPMR. Residues 39–59 form a helical membrane-spanning segment; it reads YTMQLLAALAVSMASLMIGYS. At 60 to 83 the chain is on the extracellular side; it reads SSYTSPALVSMRDNTTATFEVTMD. Residue asparagine 73 is glycosylated (N-linked (GlcNAc...) asparagine). Residues 84–104 traverse the membrane as a helical segment; the sequence is MAMWIGSIMPLSALIGGIIGG. At 105–120 the chain is on the cytoplasmic side; that stretch reads PCIEYIGRRNTILSTA. The helical transmembrane segment at 121-141 threads the bilayer; it reads LPFLAGWLFIALATNVAMILV. Topologically, residues 142-144 are extracellular; it reads GRS. The chain crosses the membrane as a helical span at residues 145–165; the sequence is ICGFCVGVASLSLPVYLGESI. The Cytoplasmic portion of the chain corresponds to 166–172; sequence QPEVRGS. Residues 173 to 193 form a helical membrane-spanning segment; it reads LGLLPTVFGNSGILMCFTAGM. Topologically, residues 194-199 are extracellular; it reads YLAWRN. Residues 200–220 form a helical membrane-spanning segment; the sequence is LALLGACIPIIFLILMFLIPE. The Cytoplasmic portion of the chain corresponds to 221-282; that stretch reads TPRWYISKGK…ELFRKNHIKP (62 aa). A helical transmembrane segment spans residues 283–303; that stretch reads VFISLGLMFFQQFSGINAVIF. Residues 304-319 are Extracellular-facing; sequence YTVQIFKDSGSTVDEN. The N-linked (GlcNAc...) asparagine glycan is linked to asparagine 319. The helical transmembrane segment at 320–340 threads the bilayer; sequence LSTIIVGLVNFISTFVAAMII. Residues 341-346 lie on the Cytoplasmic side of the membrane; sequence DRLGRK. The helical transmembrane segment at 347-367 threads the bilayer; that stretch reads MLLYISSILMCITLFTFGTFF. Residues 368-376 lie on the Extracellular side of the membrane; the sequence is YVKELMDVT. The chain crosses the membrane as a helical span at residues 377–397; it reads AFGWIPLMSLIVYVIGFSFGF. Topologically, residues 398–410 are cytoplasmic; the sequence is GPIPWLMMGEILP. The chain crosses the membrane as a helical span at residues 411-433; sequence VKIRGTAASVATAFNWSCTFVVT. At 434 to 446 the chain is on the extracellular side; the sequence is KTYEDLVLHIGPY. Residues 447 to 467 traverse the membrane as a helical segment; the sequence is GTFWLFGTLVAVAFIFVIICV. Residues 468–502 are Cytoplasmic-facing; sequence PETRGRSLEEIERRFAGPVRRTSAIANLKPMPITI.

The protein belongs to the major facilitator superfamily. Sugar transporter (TC 2.A.1.1) family. Trehalose transporter subfamily.

Its subcellular location is the cell membrane. Moderate-capacity facilitative transporter for trehalose. Does not transport maltose, sucrose or lactose. Mediates the bidirectional transfer of trehalose. Responsible for the transport of trehalose synthesized in the fat body and the incorporation of trehalose into other tissues that require a carbon source, thereby regulating trehalose levels in the hemolymph. This is Facilitated trehalose transporter Tret1 from Apis mellifera ligustica (Common honeybee).